A 478-amino-acid chain; its full sequence is TFIIA-alpha and beta-like factor (478 aa).

A disordered region spans residues 309–427 (VKQPRNIEEP…SGDDVSEQDV (119 aa)). A compositionally biased stretch (polar residues) spans 390–401 (SISNEDSATNSS). Residues 411-427 (VEEDPLNSGDDVSEQDV) are compositionally biased toward acidic residues.

It belongs to the TFIIA subunit 1 family. As to expression, testis specific. Detected in adult testis mostly in round and elongating spermatids (at protein level). Detected in testis.

The protein resides in the nucleus. Its function is as follows. May function as a testis specific transcription factor. Binds DNA in conjunction with GTF2A2 and TBP (the TATA-binding protein) and together with GTF2A2, allows mRNA transcription. In Homo sapiens (Human), this protein is TFIIA-alpha and beta-like factor (GTF2A1L).